The sequence spans 127 residues: Protein ApaG (127 aa).

The ApaG domain maps to 3 to 127 (KDKRYAFSVK…FQLNMPRVLH (125 aa)).

This Methylobacillus flagellatus (strain ATCC 51484 / DSM 6875 / VKM B-1610 / KT) protein is Protein ApaG.